The chain runs to 373 residues: ORC1-type DNA replication protein 2 (373 aa).

ATP is bound by residues Thr63–Ser67, Tyr205, and Arg217.

Belongs to the CDC6/cdc18 family.

Its function is as follows. Involved in regulation of DNA replication. The protein is ORC1-type DNA replication protein 2 (cdc6-2) of Methanosarcina acetivorans (strain ATCC 35395 / DSM 2834 / JCM 12185 / C2A).